The following is a 424-amino-acid chain: GTPase Obg (424 aa).

Residues 1–159 enclose the Obg domain; that stretch reads MVFIDTARIY…MWVRLELKLL (159 aa). The OBG-type G domain occupies 160-330; the sequence is ADVGLVGFPN…LLDKTIEILS (171 aa). GTP contacts are provided by residues 166–173, 191–195, 212–215, 282–285, and 311–313; these read GFPNAGKS, FTTLT, DIPG, NKMD, and SAL. Positions 173 and 193 each coordinate Mg(2+). The region spanning 347-424 is the OCT domain; sequence NPPEEEETLE…VRDFEFEYYE (78 aa).

It belongs to the TRAFAC class OBG-HflX-like GTPase superfamily. OBG GTPase family. As to quaternary structure, monomer. Mg(2+) is required as a cofactor.

Its subcellular location is the cytoplasm. In terms of biological role, an essential GTPase which binds GTP, GDP and possibly (p)ppGpp with moderate affinity, with high nucleotide exchange rates and a fairly low GTP hydrolysis rate. Plays a role in control of the cell cycle, stress response, ribosome biogenesis and in those bacteria that undergo differentiation, in morphogenesis control. This Caldanaerobacter subterraneus subsp. tengcongensis (strain DSM 15242 / JCM 11007 / NBRC 100824 / MB4) (Thermoanaerobacter tengcongensis) protein is GTPase Obg.